The sequence spans 212 residues: Membrane-bound lytic murein transglycosylase E (212 aa).

It belongs to the transglycosylase Slt family.

It carries out the reaction Exolytic cleavage of the (1-&gt;4)-beta-glycosidic linkage between N-acetylmuramic acid (MurNAc) and N-acetylglucosamine (GlcNAc) residues in peptidoglycan, from either the reducing or the non-reducing ends of the peptidoglycan chains, with concomitant formation of a 1,6-anhydrobond in the MurNAc residue.. Its function is as follows. Murein-degrading enzyme. May play a role in recycling of muropeptides during cell elongation and/or cell division. The polypeptide is Membrane-bound lytic murein transglycosylase E (mltE) (Buchnera aphidicola subsp. Baizongia pistaciae (strain Bp)).